Here is a 683-residue protein sequence, read N- to C-terminus: DNA ligase (683 aa).

NAD(+) is bound by residues 36–40 (DAVYD), 85–86 (SL), and glutamate 121. Lysine 123 acts as the N6-AMP-lysine intermediate in catalysis. NAD(+)-binding residues include arginine 144, glutamate 180, lysine 296, and lysine 320. Positions 413, 416, 431, and 437 each coordinate Zn(2+). In terms of domain architecture, BRCT spans 605 to 683 (PSEGHLSGKV…ESGWRVLAGL (79 aa)).

This sequence belongs to the NAD-dependent DNA ligase family. LigA subfamily. It depends on Mg(2+) as a cofactor. Mn(2+) serves as cofactor.

It carries out the reaction NAD(+) + (deoxyribonucleotide)n-3'-hydroxyl + 5'-phospho-(deoxyribonucleotide)m = (deoxyribonucleotide)n+m + AMP + beta-nicotinamide D-nucleotide.. In terms of biological role, DNA ligase that catalyzes the formation of phosphodiester linkages between 5'-phosphoryl and 3'-hydroxyl groups in double-stranded DNA using NAD as a coenzyme and as the energy source for the reaction. It is essential for DNA replication and repair of damaged DNA. This is DNA ligase from Gluconobacter oxydans (strain 621H) (Gluconobacter suboxydans).